Here is a 229-residue protein sequence, read N- to C-terminus: Molybdenum transport system permease protein ModB (229 aa).

Residues 6–214 (INLSLSVAVS…LISLLLSEWL (209 aa)) form the ABC transmembrane type-1 domain. 5 helical membrane passes run 12 to 32 (VAVSSMLWSLPLAIFVAWLLA), 45 to 65 (VIHLPLVLPPVVIGYLLLVAM), 83 to 103 (FGFSWKGAVLSSAVVAFPLVV), 132 to 152 (FFTITLPLSLPGVLAGLVLGF), and 196 to 216 (LCLFAIILSLISLLLSEWLSK).

The protein belongs to the binding-protein-dependent transport system permease family. CysTW subfamily.

The protein resides in the cell inner membrane. Functionally, part of the binding-protein-dependent transport system for molybdenum; probably responsible for the translocation of the substrate across the membrane. This chain is Molybdenum transport system permease protein ModB (modB), found in Haemophilus influenzae (strain ATCC 51907 / DSM 11121 / KW20 / Rd).